Reading from the N-terminus, the 178-residue chain is ATP synthase subunit delta (178 aa).

It belongs to the ATPase delta chain family. As to quaternary structure, F-type ATPases have 2 components, F(1) - the catalytic core - and F(0) - the membrane proton channel. F(1) has five subunits: alpha(3), beta(3), gamma(1), delta(1), epsilon(1). F(0) has three main subunits: a(1), b(2) and c(10-14). The alpha and beta chains form an alternating ring which encloses part of the gamma chain. F(1) is attached to F(0) by a central stalk formed by the gamma and epsilon chains, while a peripheral stalk is formed by the delta and b chains.

It localises to the cell inner membrane. Its function is as follows. F(1)F(0) ATP synthase produces ATP from ADP in the presence of a proton or sodium gradient. F-type ATPases consist of two structural domains, F(1) containing the extramembraneous catalytic core and F(0) containing the membrane proton channel, linked together by a central stalk and a peripheral stalk. During catalysis, ATP synthesis in the catalytic domain of F(1) is coupled via a rotary mechanism of the central stalk subunits to proton translocation. Functionally, this protein is part of the stalk that links CF(0) to CF(1). It either transmits conformational changes from CF(0) to CF(1) or is implicated in proton conduction. In Nitrosococcus oceani (strain ATCC 19707 / BCRC 17464 / JCM 30415 / NCIMB 11848 / C-107), this protein is ATP synthase subunit delta.